A 670-amino-acid chain; its full sequence is DNA ligase (670 aa).

Residues 31–35 (DAEYD), 76–77 (SL), and Glu-108 each bind NAD(+). The active-site N6-AMP-lysine intermediate is Lys-110. NAD(+) contacts are provided by Arg-131, Glu-166, Lys-271, and Lys-295. 4 residues coordinate Zn(2+): Cys-388, Cys-391, Cys-406, and Cys-412. One can recognise a BRCT domain in the interval 579–668 (NIGGSLSGKK…NTPALKKETS (90 aa)).

It belongs to the NAD-dependent DNA ligase family. LigA subfamily. It depends on Mg(2+) as a cofactor. Mn(2+) serves as cofactor.

It carries out the reaction NAD(+) + (deoxyribonucleotide)n-3'-hydroxyl + 5'-phospho-(deoxyribonucleotide)m = (deoxyribonucleotide)n+m + AMP + beta-nicotinamide D-nucleotide.. DNA ligase that catalyzes the formation of phosphodiester linkages between 5'-phosphoryl and 3'-hydroxyl groups in double-stranded DNA using NAD as a coenzyme and as the energy source for the reaction. It is essential for DNA replication and repair of damaged DNA. This is DNA ligase from Neorickettsia sennetsu (strain ATCC VR-367 / Miyayama) (Ehrlichia sennetsu).